We begin with the raw amino-acid sequence, 912 residues long: Alpha-actinin-4 (912 aa).

The tract at residues 1–267 (MVDYHAANQA…IMTYVSSFYH (267 aa)) is actin-binding. Residues 12 to 27 (QYGPNSGGGNGAGGGG) form an interaction with VCL region. A disordered region spans residues 12 to 31 (QYGPNSGGGNGAGGGGSMGD). Residues 16 to 29 (NSGGGNGAGGGGSM) show a composition bias toward gly residues. Y32 is modified (phosphotyrosine). The interval 41–62 (RDLLLDPAWEKQQRKTFTAWCN) is interaction with VCL. Calponin-homology (CH) domains lie at 51 to 155 (KQQR…LRFA) and 164 to 270 (TSAK…HAFS). Residues 85 to 89 (LMLLL) carry the LXXLL motif motif. The tract at residues 109-127 (KINNVNKALDFIASKGVKL) is interaction with VCL. The residue at position 115 (K115) is an N6-acetyllysine. The tract at residues 178-193 (TAPYKNVNVQNFHISW) is polyphosphoinositide (PIP2)-binding. Position 215 is an N6-acetyllysine (K215). T250 is subject to Phosphothreonine. Spectrin repeat units lie at residues 294–404 (HLME…WLLN), 414–519 (HLAE…ALEK), 529–640 (QLHL…ALLE), and 650–753 (HLRR…EVEN). K593 and K626 each carry N6-acetyllysine. Position 697 is a phosphoserine (S697). The tract at residues 737–912 (WEQLLTTIAR…STALYGESDL (176 aa)) is mediates interaction with MICALL2. 2 EF-hand domains span residues 766-801 (EQMQ…LGYD) and 807-842 (QGDA…ETTD). Residue D779 participates in Ca(2+) binding. K780 bears the N6-acetyllysine mark. Ca(2+) contacts are provided by D781 and E790. The residue at position 860 (K860) is an N6-acetyllysine. Residue S910 is modified to Phosphoserine.

The protein belongs to the alpha-actinin family. In terms of assembly, homodimer; antiparallel. Interacts with MAGI1. Interacts with PDLIM2. Identified in a complex with CASK, IQGAP1, MAGI2, NPHS1, SPTAN1 and SPTBN1. Identified in a IGF2BP1-dependent mRNP granule complex containing untranslated mRNAs. Component of the CART complex, at least composed of ACTN4, HGS/HRS, MYO5B and TRIM3. Binds TRIM3 at the N-terminus. Interacts with MICALL2 (preferentially in opened conformation); stimulated by RAB13 activation. Interacts with PPARG and RARA. Binds to VCL; this interaction triggers VCL conformational changes. Interacts with SEPTIN14. Interacts with IGSF8.

It is found in the nucleus. The protein resides in the cytoplasm. It localises to the cell junction. Its subcellular location is the cytoskeleton. The protein localises to the stress fiber. It is found in the perinuclear region. In terms of biological role, F-actin cross-linking protein which is thought to anchor actin to a variety of intracellular structures. This is a bundling protein. Probably involved in vesicular trafficking via its association with the CART complex. The CART complex is necessary for efficient transferrin receptor recycling but not for EGFR degradation. Involved in tight junction assembly in epithelial cells probably through interaction with MICALL2. Links MICALL2 to the actin cytoskeleton and recruits it to the tight junctions. May also function as a transcriptional coactivator, stimulating transcription mediated by the nuclear hormone receptors PPARG and RARA. Association with IGSF8 regulates the immune synapse formation and is required for efficient T-cell activation. This chain is Alpha-actinin-4, found in Mus musculus (Mouse).